A 511-amino-acid chain; its full sequence is Maturase K (511 aa).

It belongs to the intron maturase 2 family. MatK subfamily.

Its subcellular location is the plastid. It is found in the chloroplast. In terms of biological role, usually encoded in the trnK tRNA gene intron. Probably assists in splicing its own and other chloroplast group II introns. This Hordeum vulgare (Barley) protein is Maturase K.